We begin with the raw amino-acid sequence, 195 residues long: Imidazoleglycerol-phosphate dehydratase (195 aa).

The protein belongs to the imidazoleglycerol-phosphate dehydratase family.

It localises to the cytoplasm. The enzyme catalyses D-erythro-1-(imidazol-4-yl)glycerol 3-phosphate = 3-(imidazol-4-yl)-2-oxopropyl phosphate + H2O. It functions in the pathway amino-acid biosynthesis; L-histidine biosynthesis; L-histidine from 5-phospho-alpha-D-ribose 1-diphosphate: step 6/9. The protein is Imidazoleglycerol-phosphate dehydratase of Cereibacter sphaeroides (strain ATCC 17029 / ATH 2.4.9) (Rhodobacter sphaeroides).